We begin with the raw amino-acid sequence, 41 residues long: Pi-stichotoxin-Hmg5c (41 aa).

3 disulfides stabilise this stretch: cysteine 4/cysteine 37, cysteine 6/cysteine 30, and cysteine 20/cysteine 38.

It belongs to the sea anemone type 3 (BDS) potassium channel toxin family.

The protein resides in the secreted. The protein localises to the nematocyst. Its function is as follows. Toxin with different activities on acid-sensing ion channels (ASIC) and nicotinic acetylcholine receptors. Is able to bind T.californica muscle-type nicotinic acetylcholine receptors (nAChR) (alpha-1-beta-1-delta-epsilon (CHRNA1-CHRNB1-CHRND-CHRNE)), and human alpha-7/CHRNA7 nicotinic acetylcholine receptors. Weakly and reversibly inhibits rat homomeric ASIC1 (isoform ASIC1a) (IC(50)=1.25 uM), while it potentiates rat homomeric ASIC3 (EC(50)=1.53 uM). Rat ASIC1a current inhibition is not complete, and reaches a maximum of 86% inhibition. On rat ASIC3, does not activate the channel itself, but produces a remarkable potentiation of the transient current resulting from the acidic pulse. At the maximal applied concentration, elicits responses that are twice as high as those produced by extracellular protons. Surprisingly, shows a different activity on human ASIC3. On the truncated human ASIC3 (ASIC3-D20), the toxin weakly inhibits the channel. Molecular modeling interaction with rat ASIC1a suggests that it hinders the collapse of acidic pockets and stabilizes nonconducting channels state. In vivo, causes an anxiolytic effect on mouse behavior. Also shows an analgesic activity in an acid-induced muscle pain model, and important anti-inflammatory effect in models of acute local inflammation. This Heteractis magnifica (Magnificent sea anemone) protein is Pi-stichotoxin-Hmg5c.